The sequence spans 424 residues: Probable carboxypeptidase AN5749 (424 aa).

An N-terminal signal peptide occupies residues 1–17 (MNLSILAALALVSFSTA). N-linked (GlcNAc...) asparagine glycosylation is present at asparagine 58. A Zn(2+)-binding site is contributed by aspartate 139. Catalysis depends on glutamate 171, which acts as the Proton acceptor. Residue glutamate 172 participates in Zn(2+) binding. N-linked (GlcNAc...) asparagine glycosylation is found at asparagine 184 and asparagine 323.

This sequence belongs to the peptidase M20A family. The cofactor is Zn(2+).

Its subcellular location is the secreted. The polypeptide is Probable carboxypeptidase AN5749 (Emericella nidulans (strain FGSC A4 / ATCC 38163 / CBS 112.46 / NRRL 194 / M139) (Aspergillus nidulans)).